The primary structure comprises 1051 residues: Transcription intermediary factor 1-alpha (1051 aa).

The disordered stretch occupies residues 1-42; the sequence is MEVAVEKAAAAAAPAGGPAAAAPSGENEAESRQGPDSESGGE. A Glycyl lysine isopeptide (Lys-Gly) (interchain with G-Cter in SUMO2) cross-link involves residue Lys7. Low complexity predominate over residues 8–23; the sequence is AAAAAAPAGGPAAAAP. An RING-type zinc finger spans residues 52–77; it reads CAVCHQNIQSRVPKLLPCLHSFCQRC. The segment at 94 to 115 is disordered; that stretch reads SAETPPPAPAPAPAPGSPAGGP. The residue at position 97 (Thr97) is a Phosphothreonine. A compositionally biased stretch (pro residues) spans 97–109; that stretch reads TPPPAPAPAPAPG. Ser110 is modified (phosphoserine). 2 consecutive B box-type zinc fingers follow at residues 158 to 211 and 218 to 259; these read KSNQ…VSPE and QRPV…YQFI. Zn(2+)-binding residues include Cys163, Cys166, Cys187, and His200. Lys205 participates in a covalent cross-link: Glycyl lysine isopeptide (Lys-Gly) (interchain with G-Cter in SUMO2). Residues Cys223, His226, Cys246, and His251 each contribute to the Zn(2+) site. Residue Lys276 forms a Glycyl lysine isopeptide (Lys-Gly) (interchain with G-Cter in SUMO2) linkage. Positions 289–359 form a coiled coil; the sequence is NQIQNRIIEI…AGLSKQLEHV (71 aa). The tract at residues 429–457 is disordered; that stretch reads ESQPQMPKQNPVVEQSSQPPGGLPSNQLS. Residues 431-457 are compositionally biased toward polar residues; sequence QPQMPKQNPVVEQSSQPPGGLPSNQLS. Glycyl lysine isopeptide (Lys-Gly) (interchain with G-Cter in SUMO2) cross-links involve residues Lys436 and Lys458. Omega-N-methylarginine is present on Arg469. 2 stretches are compositionally biased toward low complexity: residues 479–490 and 501–510; these read AQRQQVQRRPAP and PIQQPSISHQ. Positions 479-551 are disordered; sequence AQRQQVQRRP…PSQNVPRQTT (73 aa). The segment covering 526–535 has biased composition (pro residues); sequence PNGPVLPPYP. Residues 538–551 show a composition bias toward polar residues; that stretch reads LRYSPSQNVPRQTT. Residues Lys553 and Lys642 each participate in a glycyl lysine isopeptide (Lys-Gly) (interchain with G-Cter in SUMO2) cross-link. Positions 644 to 713 are disordered; sequence TGVDHAQPRP…PAGADSTHKV (70 aa). A phosphoserine mark is found at Ser655, Ser661, and Ser668. The segment covering 655–667 has biased composition (polar residues); it reads SNRTVQSPNSSVP. Low complexity predominate over residues 686–708; it reads SPSASSVGSRGSSGSSSKPAGAD. Glycyl lysine isopeptide (Lys-Gly) (interchain with G-Cter in SUMO2) cross-links involve residues Lys703 and Lys712. Residues Lys724 and Lys742 each participate in a glycyl lysine isopeptide (Lys-Gly) (interchain with G-Cter in SUMO); alternate cross-link. Lys724 participates in a covalent cross-link: Glycyl lysine isopeptide (Lys-Gly) (interchain with G-Cter in SUMO1); alternate. Glycyl lysine isopeptide (Lys-Gly) (interchain with G-Cter in SUMO2); alternate cross-links involve residues Lys724 and Lys742. Phosphoserine is present on residues Ser745 and Ser769. The tract at residues 755–780 is nuclear receptor binding site (NRBS); it reads NYPRSILTSLLLNSSQSSASEETVLR. The interval 771–827 is disordered; sequence SSASEETVLRSDAPDSTGDQPGLHQENSSNGKSEWSDASQKSPVHVGETRKEDDPNE. Residues 795-812 are compositionally biased toward polar residues; the sequence is QENSSNGKSEWSDASQKS. A Glycyl lysine isopeptide (Lys-Gly) (interchain with G-Cter in SUMO2) cross-link involves residue Lys802. Phosphoserine is present on Ser809. Lys811 is covalently cross-linked (Glycyl lysine isopeptide (Lys-Gly) (interchain with G-Cter in SUMO2)). Ser812 is subject to Phosphoserine. Thr819 is subject to Phosphothreonine. Residues 827–874 form a PHD-type zinc finger; the sequence is EDWCAVCQNGGELLCCEKCPKVFHLTCHVPTLTNFPSGEWICTFCRDL. The interaction with histone H3 that is not methylated at 'Lys-4' (H3K4me0) stretch occupies residues 835–841; the sequence is NGGELLC. Lys876 participates in a covalent cross-link: Glycyl lysine isopeptide (Lys-Gly) (interchain with G-Cter in SUMO2). A Nuclear localization signal motif is present at residues 892-908; the sequence is KRKSEGLTKLTPIDKRK. The region spanning 900–1005 is the Bromo domain; that stretch reads KLTPIDKRKC…SYFEELLKNL (106 aa). Residues Lys950 and Lys993 each participate in a glycyl lysine isopeptide (Lys-Gly) (interchain with G-Cter in SUMO2) cross-link. The segment at 1024 to 1051 is disordered; the sequence is KFSDDSDDDFVQPRKKRLKSTEDRQLLK. 2 positions are modified to phosphoserine: Ser1026 and Ser1029. Lys1042 participates in a covalent cross-link: Glycyl lysine isopeptide (Lys-Gly) (interchain with G-Cter in SUMO2). Over residues 1042–1051 the composition is skewed to basic and acidic residues; that stretch reads KSTEDRQLLK. Phosphoserine is present on Ser1043.

In terms of assembly, interacts (via bromo domain) with histone H3 (via N-terminus), provided that it is not methylated at 'Lys-4' (H3K4me0). Does not interact with histone H3 that is methylated at 'Lys-4' (H3K4me1, H3K4me2 or H3K4me3). Interacts (via bromo domain) with histone H3 (via N-terminus) that is acetylated at 'Lys-23' (H3K23ac). Has the highest affinity for histone H3 that is both unmodified at 'Lys-4' (H3K4me0) and acetylated at 'Lys-23' (H3K23ac). Has very low affinity for histone H3 that is methylated at 'Lys-9' (H3K9me), or acetylated at both 'Lys-9' (H3K9ac) and 'Lys-14' (H3K14ac), or acetylated at 'Lys-27' (H3K27ac) (in vitro). Interacts with TRIM16. Interacts with NR3C2/MCR. Interacts with the ligand-binding domain of estrogen receptors (in vitro). Interaction with DNA-bound estrogen receptors requires the presence of estradiol. Interacts with AR, CARM1, KAT5/TIP60, NCOA2/GRIP1, BRD7, CBX1, CBX3 and CBX5. Part of a coactivator complex containing TRIM24, NCOA2/GRIP1 and CARM1. Interacts with p53/TP53 and PML. Sumoylated. Post-translationally, phosphorylated at Ser-768 by ATM kinase induces ubiquitination and degradation during DNA damage. In terms of processing, undergoes ubiquitination-mediated degradation in response to DNA damage. In terms of tissue distribution, detected in embryonic and adult liver. Detected in zygote and throughout embryogenesis (at protein level). Detected in all adult tissues, with the highest expression level in testis.

The protein resides in the nucleus. It is found in the cytoplasm. The catalysed reaction is S-ubiquitinyl-[E2 ubiquitin-conjugating enzyme]-L-cysteine + [acceptor protein]-L-lysine = [E2 ubiquitin-conjugating enzyme]-L-cysteine + N(6)-ubiquitinyl-[acceptor protein]-L-lysine.. Its pathway is protein modification; protein ubiquitination. Its function is as follows. Transcriptional coactivator that interacts with numerous nuclear receptors and coactivators and modulates the transcription of target genes. Interacts with chromatin depending on histone H3 modifications, having the highest affinity for histone H3 that is both unmodified at 'Lys-4' (H3K4me0) and acetylated at 'Lys-23' (H3K23ac). Has E3 protein-ubiquitin ligase activity. Promotes ubiquitination and proteasomal degradation of p53/TP53. Plays a role in the regulation of cell proliferation and apoptosis via its effects on p53/TP53 levels. Up-regulates ligand-dependent transcription activation by AR, GCR/NR3C1, thyroid hormone receptor (TR) and ESR1. Modulates transcription activation by retinoic acid (RA) receptors, such as RARA. Plays a role in regulating retinoic acid-dependent proliferation of hepatocytes. Required for normal transition from proliferating neonatal hepatocytes to quiescent adult hepatocytes. Functionally, transcriptional coactivator that interacts with numerous nuclear receptors and coactivators and modulates the transcription of target genes. Interacts with chromatin depending on histone H3 modifications, having the highest affinity for histone H3 that is both unmodified at 'Lys-4' (H3K4me0) and acetylated at 'Lys-23' (H3K23ac). Has E3 protein-ubiquitin ligase activity. During the DNA damage response, participates in an autoregulatory feedback loop with TP53. Early in response to DNA damage, ATM kinase phosphorylates TRIM24 leading to its ubiquitination and degradation. After sufficient DNA repair has occurred, TP53 activates TRIM24 transcription, ultimately leading to TRIM24-mediated TP53 ubiquitination and degradation. Plays a role in the regulation of cell proliferation and apoptosis, at least in part via its effects on p53/TP53 levels. Up-regulates ligand-dependent transcription activation by AR, GCR/NR3C1, thyroid hormone receptor (TR) and ESR1. Modulates transcription activation by retinoic acid (RA) receptors, including RARA. Plays a role in regulating retinoic acid-dependent proliferation of hepatocytes. Also participates in innate immunity by mediating the specific 'Lys-63'-linked ubiquitination of TRAF3 leading to activation of downstream signal transduction of the type I IFN pathway. Additionally, negatively regulates NLRP3/CASP1/IL-1beta-mediated pyroptosis and cell migration probably by ubiquitinating NLRP3. The sequence is that of Transcription intermediary factor 1-alpha (Trim24) from Mus musculus (Mouse).